We begin with the raw amino-acid sequence, 310 residues long: Membrane protein insertase YidC 2 (310 aa).

The signal sequence occupies residues 1–23 (MKKIYKRLLFSGLALSMLFFLSG). Cysteine 24 is lipidated: N-palmitoyl cysteine. The S-diacylglycerol cysteine moiety is linked to residue cysteine 24. 5 helical membrane passes run 34 to 54 (GEGW…QYLA), 57 to 77 (LGLG…LLIL), 136 to 156 (FGGL…ALYI), 180 to 200 (IITV…TLSV), and 220 to 240 (VMIS…SGIF). Residues 263–310 (EFKKNPPKPFKSNARKDITPQANNDKKLITSKKQKSNRNAGKQRHHKQ) form a disordered region. The segment covering 276–290 (ARKDITPQANNDKKL) has biased composition (basic and acidic residues). Over residues 291-310 (ITSKKQKSNRNAGKQRHHKQ) the composition is skewed to basic residues.

The protein belongs to the OXA1/ALB3/YidC family. Type 2 subfamily.

It localises to the cell membrane. Functionally, required for the insertion and/or proper folding and/or complex formation of integral membrane proteins into the membrane. Involved in integration of membrane proteins that insert both dependently and independently of the Sec translocase complex, as well as at least some lipoproteins. Partially complements an E.coli yidC depletion experiment. In Streptococcus mutans serotype c (strain ATCC 700610 / UA159), this protein is Membrane protein insertase YidC 2 (yidC2).